A 182-amino-acid chain; its full sequence is Ribosome-recycling factor (182 aa).

The protein belongs to the RRF family.

The protein localises to the cytoplasm. Responsible for the release of ribosomes from messenger RNA at the termination of protein biosynthesis. May increase the efficiency of translation by recycling ribosomes from one round of translation to another. The sequence is that of Ribosome-recycling factor from Prochlorococcus marinus subsp. pastoris (strain CCMP1986 / NIES-2087 / MED4).